The chain runs to 252 residues: tRNA pseudouridine synthase A (252 aa).

Catalysis depends on aspartate 54, which acts as the Nucleophile. Tyrosine 113 is a substrate binding site.

It belongs to the tRNA pseudouridine synthase TruA family. Homodimer.

The catalysed reaction is uridine(38/39/40) in tRNA = pseudouridine(38/39/40) in tRNA. Its function is as follows. Formation of pseudouridine at positions 38, 39 and 40 in the anticodon stem and loop of transfer RNAs. This is tRNA pseudouridine synthase A from Bacteroides fragilis (strain ATCC 25285 / DSM 2151 / CCUG 4856 / JCM 11019 / LMG 10263 / NCTC 9343 / Onslow / VPI 2553 / EN-2).